Reading from the N-terminus, the 1283-residue chain is Rab11 family-interacting protein 1 (1283 aa).

In terms of domain architecture, C2 spans 1-126; the sequence is MSLMVSAGRG…DQGRRKTQWY (126 aa). Over residues 161–185 the composition is skewed to basic and acidic residues; that stretch reads SMKDKSRNPFGKLKDKIKGKNKDSG. Residues 161–281 form a disordered region; sequence SMKDKSRNPF…VMSHKRTAST (121 aa). Phosphoserine is present on residues serine 184, serine 202, serine 206, and serine 234. The span at 225-239 shows a compositional bias: polar residues; the sequence is NLQKTPLSQSMSVLP. Positions 257 to 266 are enriched in acidic residues; the sequence is WDEDDNEDES. Phosphoserine occurs at positions 300, 315, 339, 341, 343, 345, 356, 357, and 382. 5 disordered regions span residues 330 to 727, 741 to 782, 835 to 913, 969 to 993, and 1037 to 1141; these read EAKG…QEVP, VGEL…ASVP, PQEL…LFRM, DERI…KSST, and ASVT…RVEN. A compositionally biased stretch (basic and acidic residues) spans 419–433; it reads ATKEAKESKKPESRR. At serine 435 the chain carries Phosphoserine. Basic and acidic residues predominate over residues 442–451; the sequence is GKKDVAKGSE. Serine 477 carries the phosphoserine modification. Positions 482–491 are enriched in basic and acidic residues; it reads DLVRRSEKDT. Phosphoserine is present on residues serine 529 and serine 545. The span at 588–612 shows a compositional bias: low complexity; sequence SSESPSVFSSLSSPIAAPISTSTPI. Polar residues predominate over residues 637–652; sequence QTESLTPVPNSGSSAL. The segment covering 698–715 has biased composition (basic and acidic residues); the sequence is ETGRQEEELPRFPCKKQD. A Phosphoserine modification is found at serine 758. Basic and acidic residues predominate over residues 855–866; that stretch reads ESPHAEDSERES. Residues 975–986 are compositionally biased toward acidic residues; sequence VEDDGDQVEDDG. Residues 1037–1048 are compositionally biased toward polar residues; that stretch reads ASVTAPSEQTTE. Residues 1116-1131 are compositionally biased toward basic and acidic residues; that stretch reads SDTHHTSTAESQKKAT. The residue at position 1135 (serine 1135) is a Phosphoserine. The region spanning 1211–1273 is the FIP-RBD domain; that stretch reads KKYSPSDPAF…EETPNILRIP (63 aa). Residues 1219–1283 are necessary for interaction with RAB4A and RAB11A, subcellular location and endosomal recycling; it reads AFAYAQLTHD…TQVGKKAGKM (65 aa).

As to quaternary structure, interacts with RAB11A (GTP-bound form); the interaction induces RAB11FIP1 recruitment to membranes. Interacts with RAB14 (GTP-bound form). In terms of assembly, homooligomer. Isoform 2 interacts with RAB4A, RAB11A, RAB11B and RAB25. According to PubMed:15280022, RAB4A binding to RAB11FIP1 is of very low affinity in vitro and in vivo. As to expression, isoform 2 is expressed in brain, heart, testis, lung, spleen, ovary and small intestine.

Its subcellular location is the recycling endosome. The protein resides in the cytoplasmic vesicle. The protein localises to the phagosome membrane. A Rab11 effector protein involved in the endosomal recycling process. Also involved in controlling membrane trafficking along the phagocytic pathway and in phagocytosis. Interaction with RAB14 may function in the process of neurite formation. The polypeptide is Rab11 family-interacting protein 1 (Homo sapiens (Human)).